The chain runs to 267 residues: Energy-coupling factor transporter transmembrane protein EcfT (267 aa).

A run of 5 helical transmembrane segments spans residues 26–46, 73–93, 116–136, 151–171, and 247–267; these read IILTFIMMIFIFLINTYWGYL, ILFIVVFAGIINIFMIKGTVI, LFLLIITASLLTYTTTPIALT, VPVHEIAMMMTIALRFIPTLL, and LVTGITVVFMTWVILMEYVFF.

It belongs to the energy-coupling factor EcfT family. Forms a stable energy-coupling factor (ECF) transporter complex composed of 2 membrane-embedded substrate-binding proteins (S component), 2 ATP-binding proteins (A component) and 2 transmembrane proteins (T component). May be able to interact with more than 1 S component at a time.

It is found in the cell membrane. Transmembrane (T) component of an energy-coupling factor (ECF) ABC-transporter complex. Unlike classic ABC transporters this ECF transporter provides the energy necessary to transport a number of different substrates. This chain is Energy-coupling factor transporter transmembrane protein EcfT, found in Ruminiclostridium cellulolyticum (strain ATCC 35319 / DSM 5812 / JCM 6584 / H10) (Clostridium cellulolyticum).